The primary structure comprises 373 residues: SH3 domain-binding protein 5-like (373 aa).

Residues 1–36 (MEGKEGPPCEVRLPTPGAEREGPVHPELGAFGESAS) form a disordered region. Coiled-coil stretches lie at residues 35–98 (ASDA…ESAR) and 170–258 (WQEM…KLRY). 2 disordered regions span residues 274-308 (ARRTQSSVLSQRAPPLGAEAPPSVKDGETGPPADT) and 332-373 (DLTD…SVSL). Basic and acidic residues predominate over residues 332 to 360 (DLTDVTSLDGRETGAVESGGSRERGEDRG).

Belongs to the SH3BP5 family.

Functions as a guanine nucleotide exchange factor (GEF) for rab11a. The sequence is that of SH3 domain-binding protein 5-like (sh3bp5l) from Xenopus laevis (African clawed frog).